A 204-amino-acid polypeptide reads, in one-letter code: Inactive ribonuclease-like protein 9 (204 aa).

The first 26 residues, 1–26 (MMRTLITTHPLLLLLLLQQLLQPVQL), serve as a signal peptide directing secretion. 3 disulfides stabilise this stretch: Cys-97–Cys-152, Cys-115–Cys-167, and Cys-122–Cys-129. Residues Asn-130 and Asn-142 are each glycosylated (N-linked (GlcNAc...) asparagine).

It belongs to the pancreatic ribonuclease family.

The protein resides in the secreted. Functionally, does not exhibit any ribonuclease activity. The chain is Inactive ribonuclease-like protein 9 (RNASE9) from Chlorocebus pygerythrus (Vervet monkey).